The primary structure comprises 189 residues: UPF0301 protein PFL_5830 (189 aa).

The protein belongs to the UPF0301 (AlgH) family.

The chain is UPF0301 protein PFL_5830 from Pseudomonas fluorescens (strain ATCC BAA-477 / NRRL B-23932 / Pf-5).